We begin with the raw amino-acid sequence, 370 residues long: Probable butyrate kinase (370 aa).

Belongs to the acetokinase family.

It is found in the cytoplasm. The enzyme catalyses butanoate + ATP = butanoyl phosphate + ADP. This chain is Probable butyrate kinase, found in Elusimicrobium minutum (strain Pei191).